A 257-amino-acid polypeptide reads, in one-letter code: Hydroxyacylglutathione hydrolase (257 aa).

Residues histidine 54, histidine 56, aspartate 58, histidine 59, histidine 113, aspartate 137, and histidine 175 each coordinate Zn(2+).

It belongs to the metallo-beta-lactamase superfamily. Glyoxalase II family. As to quaternary structure, monomer. It depends on Zn(2+) as a cofactor.

The enzyme catalyses an S-(2-hydroxyacyl)glutathione + H2O = a 2-hydroxy carboxylate + glutathione + H(+). It functions in the pathway secondary metabolite metabolism; methylglyoxal degradation; (R)-lactate from methylglyoxal: step 2/2. Functionally, thiolesterase that catalyzes the hydrolysis of S-D-lactoyl-glutathione to form glutathione and D-lactic acid. The polypeptide is Hydroxyacylglutathione hydrolase (Nostoc sp. (strain PCC 7120 / SAG 25.82 / UTEX 2576)).